We begin with the raw amino-acid sequence, 82 residues long: Small ribosomal subunit protein bS16 (82 aa).

It belongs to the bacterial ribosomal protein bS16 family.

This chain is Small ribosomal subunit protein bS16, found in Rippkaea orientalis (strain PCC 8801 / RF-1) (Cyanothece sp. (strain PCC 8801)).